Here is a 275-residue protein sequence, read N- to C-terminus: Protein COFACTOR ASSEMBLY OF COMPLEX C SUBUNIT B CCB2, chloroplastic (275 aa).

The N-terminal 19 residues, 1–19 (MSIQICNFPFHPKFALQPR), are a transit peptide targeting the chloroplast. Topologically, residues 20–65 (AQRSTRIFARTENDSPQSKTSDQQLNLSVLRFTFGIPGFDESYLPR) are stromal. Residues 66-86 (WIGYGFGSLLLLNHFSASAPI) traverse the membrane as a helical segment. The Lumenal segment spans residues 87–93 (SESQMRS). A helical membrane pass occupies residues 94-114 (EALGLSLAAFSIALPYIGKFL). Residues 115 to 275 (KGSVVEQRSL…IGAMAEKFRG (161 aa)) are Stromal-facing.

The protein resides in the plastid. The protein localises to the chloroplast thylakoid membrane. In terms of biological role, required for the biogenesis and accumulation of native cytochrome b6 in the thylakoid membrane. Controls the conversion of apocytochrome b6 to holocytochrome b6. Required for covalent binding of the c-type heme to cytochrome b6. This is Protein COFACTOR ASSEMBLY OF COMPLEX C SUBUNIT B CCB2, chloroplastic from Arabidopsis thaliana (Mouse-ear cress).